A 1004-amino-acid polypeptide reads, in one-letter code: RIRYKGIVCDRCGVEVTSSKVRRERMGHIELAAPVTHIWYFKGIPSRMGLILDMSPRSLEEIIYFASYVVINPGNTPLEKKQLITEAEYRQYQDQYGTDTFDAKMGAEAIKELLAEVDLEKHAKELKNELKDATGQKRTRAVRRLDIVEAFIQSGNKPEWMVMDVVPVIPPDLRPMVQLEGGRFATSDLNDLYRRVINRNNRLKRLLDLNAPGIIVQNEKRMLQEAVDALIDNGRRGRPVSGPGNRPLKSLSHLLKGKQGRFRQNLLGKRVDYSGRSVIDVGPFLKMNQMGLPRQMAVELFKPFIYNRLIELGTENGGANNLRSARRLVERHEDVVQDVLEEVVKEHPVLLNRAPTLHRLGIQAFEPVLVSGKAMRLHPLVTTAYNADFDGDQMAIHVPLSDEAQAEARLLMLAASHILAPKDGKPIVAPSQDMTIGNYYLTTEEAGIKGEGMIFSSADEVKMALQNHEVELHTRIGIAASSFDKAKPFTDHQRARIMVTTVGKVIFNEILPDDFPYINEPKSENFNGIDGRFFLDPGTDIVGWFKNESLNGPFKSGFLSDIIAQIYARYQVTRTSVLLDDMKDLGYNISTRSGLTVRMSDVTELPEKGEVLKEAHEKVAKITKQFRRGLLTDDERYIQVTQTWSDAQDKIKSMLIASFDSKNPIFMMSDSGARGNISNSFQLAGMRGLMAAPNGKVIELPVTANFREGLCVLEMFISTHGARKGMTDTALKTANSGYLTRRLVDVAQEVIVREEDCGTDRGLDVSAIMDGNEVIEPLYDRILGRYAMKPVIDPKTGEVIAKKNQMIDEHVADQIIDAGIQTVTIRSIFTCRTEHGVCVKCYGRNMATGDIVEVGEAVGTVAAQSIGEPGTQLTMRTFHTGGVALSEDITQGLPRVQEIFEARNPKGRAEISEVTGKVTSIEENPADRTKTVTIEGETDTREYVLPISARLRVAEGDEIHRSEAINEGPLDPKELIKVSSTLKTENYMLAEVRKVYRMQGVGIA.

Mg(2+) is bound by residues Asp-388, Asp-390, and Asp-392. Zn(2+) contacts are provided by Cys-757, Cys-831, Cys-838, and Cys-841.

This sequence belongs to the RNA polymerase beta' chain family. As to quaternary structure, the RNAP catalytic core consists of 2 alpha, 1 beta, 1 beta' and 1 omega subunit. When a sigma factor is associated with the core the holoenzyme is formed, which can initiate transcription. Mg(2+) is required as a cofactor. The cofactor is Zn(2+).

It carries out the reaction RNA(n) + a ribonucleoside 5'-triphosphate = RNA(n+1) + diphosphate. Its function is as follows. DNA-dependent RNA polymerase catalyzes the transcription of DNA into RNA using the four ribonucleoside triphosphates as substrates. This is DNA-directed RNA polymerase subunit beta' from Oenococcus oeni (Leuconostoc oenos).